An 801-amino-acid polypeptide reads, in one-letter code: Phenylalanine--tRNA ligase beta subunit (801 aa).

In terms of domain architecture, tRNA-binding spans 39–147; it reads GGGLDQVVVA…SDLPLGVPLF (109 aa). Residues 401–477 enclose the B5 domain; the sequence is VSHRTIRFRV…RLNGYDRIET (77 aa). 4 residues coordinate Mg(2+): Asp-455, Asp-461, Glu-464, and Glu-465. Residues 708 to 801 enclose the FDX-ACB domain; sequence SRFPDTFRDI…LVAKLGATIR (94 aa).

The protein belongs to the phenylalanyl-tRNA synthetase beta subunit family. Type 1 subfamily. In terms of assembly, tetramer of two alpha and two beta subunits. It depends on Mg(2+) as a cofactor.

It is found in the cytoplasm. It catalyses the reaction tRNA(Phe) + L-phenylalanine + ATP = L-phenylalanyl-tRNA(Phe) + AMP + diphosphate + H(+). This Geobacter sulfurreducens (strain ATCC 51573 / DSM 12127 / PCA) protein is Phenylalanine--tRNA ligase beta subunit.